A 931-amino-acid chain; its full sequence is Probable UDP-N-acetylglucosamine--peptide N-acetylglucosaminyltransferase SPINDLY (931 aa).

Residues 1–15 (MAWTEKDVENGKESE) show a composition bias toward basic and acidic residues. The disordered stretch occupies residues 1–38 (MAWTEKDVENGKESESLGNNGFLKGGQSSSGSKGSPGR). Over residues 25 to 37 (GGQSSSGSKGSPG) the composition is skewed to low complexity. TPR repeat units lie at residues 48–81 (DKDAITYANILRSRNKFVDALAIYESVLEKDSKS), 82–115 (IESLIGKGICLQMQNTGRLAFESFSEAIKVDPQN), 116–149 (ACALTHCGILYKDEGRLVEAAESYEKALKADPSY), 157–190 (AIVLTDIGTSLKLAGNTQEGIQKYYEAIKIDSHY), 191–224 (APAYYNLGVVYSEMMQYDMALNCYEKAALERPMY), 225–258 (AEAYCNMGVIFKNRGDLESAIACYERCLAVSPNF), 266–299 (AIALTDLGTKVKLEGDINQGVAYYKKALCYNWHY), 300–333 (ADAMYNLGVAYGEMLKFDMAIVFYELAFHFNPHC), 334–367 (AEACNNLGVIYKDRDNLDKAVECYQLALSIKPNF), 369–401 (QSLNNLGVVYTVQGKMDAAASMIEKAIIANPTY), and 402–435 (AEAYNNLGVLYRDAGNISLAIEAYEQCLKIDPDS). A catalytic region region spans residues 436 to 931 (RNAGQNRLLA…NHNGNHGNLS (496 aa)). Over residues 864-884 (QQQQTQTESVVPEESSVNPSE) the composition is skewed to low complexity. Residues 864–931 (QQQQTQTESV…NHNGNHGNLS (68 aa)) form a disordered region. Over residues 910-931 (KSSTSEENGVQSNHNGNHGNLS) the composition is skewed to polar residues.

The protein belongs to the glycosyltransferase 41 family. O-GlcNAc transferase subfamily.

It localises to the nucleus. It carries out the reaction L-seryl-[protein] + UDP-N-acetyl-alpha-D-glucosamine = 3-O-(N-acetyl-beta-D-glucosaminyl)-L-seryl-[protein] + UDP + H(+). The enzyme catalyses L-threonyl-[protein] + UDP-N-acetyl-alpha-D-glucosamine = 3-O-(N-acetyl-beta-D-glucosaminyl)-L-threonyl-[protein] + UDP + H(+). The protein operates within protein modification; protein glycosylation. Functionally, probable O-linked N-acetylglucosamine transferase (OGT) involved in various processes such as gibberellin (GA) signaling pathway. OGTs catalyze the addition of nucleotide-activated sugars directly onto the polypeptide through O-glycosidic linkage with the hydroxyl of serine or threonine. Probably acts by adding O-linked sugars to yet unknown proteins. In Solanum lycopersicum (Tomato), this protein is Probable UDP-N-acetylglucosamine--peptide N-acetylglucosaminyltransferase SPINDLY (SPY).